A 1119-amino-acid polypeptide reads, in one-letter code: Synaptojanin (1119 aa).

The SAC domain maps to 119–438 (LQRLLSSQMF…GDQCSTIYAG (320 aa)). Residues 532 to 826 (GTWNVNGGKN…DRSELKTSDH (295 aa)) form a catalytic region. 2 disordered regions span residues 986 to 1005 (SLTLTGSAPDRPRPPSARSE) and 1042 to 1119 (EHVP…PKNM). Residues 1050-1072 (PQSNNNKSPPQACLFNPFTQSAP) show a composition bias toward low complexity. Pro residues-rich tracts occupy residues 1073 to 1085 (SPAPPPSTIPLPP) and 1093 to 1119 (PGPPAVPVRKAPPPPPRPVIPPRPKNM).

This sequence belongs to the synaptojanin family. It in the central section; belongs to the inositol 1,4,5-trisphosphate 5-phosphatase family.

The protein localises to the cytoplasmic vesicle. It is found in the secretory vesicle. Its subcellular location is the synaptic vesicle. The protein resides in the synapse. The enzyme catalyses a 1,2-diacyl-sn-glycero-3-phospho-(1D-myo-inositol-4,5-bisphosphate) + H2O = a 1,2-diacyl-sn-glycero-3-phospho-(1D-myo-inositol 4-phosphate) + phosphate. Probable inositol 5-phosphatase which regulates synaptic vesicle recycling in neurons by regulating clathrin-mediated endocytosis. In Caenorhabditis elegans, this protein is Synaptojanin.